A 159-amino-acid chain; its full sequence is Cytochrome c-type biogenesis protein CcmE (159 aa).

The Cytoplasmic portion of the chain corresponds to 1–7 (MTPRQRR). Residues 8 to 28 (LGMLLAALACAGIALALVLNA) traverse the membrane as a helical; Signal-anchor for type II membrane protein segment. Over 29–159 (FRSNLVFFFS…LAEGERETQR (131 aa)) the chain is Periplasmic. Residues histidine 123 and tyrosine 127 each coordinate heme.

Belongs to the CcmE/CycJ family.

The protein resides in the cell inner membrane. In terms of biological role, heme chaperone required for the biogenesis of c-type cytochromes. Transiently binds heme delivered by CcmC and transfers the heme to apo-cytochromes in a process facilitated by CcmF and CcmH. This is Cytochrome c-type biogenesis protein CcmE from Cupriavidus pinatubonensis (strain JMP 134 / LMG 1197) (Cupriavidus necator (strain JMP 134)).